The primary structure comprises 156 residues: MRPLSIKPTSLDVARHATSVESFGNHRPPISPWHSPVPYLFGGLAAMLGLIAFALLILACSYWRLSTSGDDSGERVDEEKESRSGVKAASAACEEKVLVIMAGDDLPRFLATPAANKCMCGHEGRMVIFKEDGIGAGEEKMGDREKAKENEETTSQ.

At 1–39 the chain is on the extracellular side; the sequence is MRPLSIKPTSLDVARHATSVESFGNHRPPISPWHSPVPY. Residues 40–60 traverse the membrane as a helical segment; it reads LFGGLAAMLGLIAFALLILAC. Residues 61 to 156 lie on the Cytoplasmic side of the membrane; that stretch reads SYWRLSTSGD…AKENEETTSQ (96 aa). Residues 67 to 87 are disordered; sequence TSGDDSGERVDEEKESRSGVK. Residues 72-84 are compositionally biased toward basic and acidic residues; that stretch reads SGERVDEEKESRS. Residues 99–103 carry the VIMAG motif; it reads VIMAG. The disordered stretch occupies residues 136–156; it reads AGEEKMGDREKAKENEETTSQ.

The protein belongs to the GLUTAMINE DUMPER 1 (TC 9.B.60) family. In terms of tissue distribution, expressed in the vascular tissues, even in the minor veins of the leaves.

The protein localises to the membrane. Its function is as follows. Probable subunit of an amino acid transporter involved in the regulation of the amino acid metabolism. Stimulates amino acid export by activating nonselective amino acid facilitators. This is Protein GLUTAMINE DUMPER 4 (GDU4) from Arabidopsis thaliana (Mouse-ear cress).